A 326-amino-acid polypeptide reads, in one-letter code: MGVLRAGLCPGLTQDMVQLLQSRGIKTVVDLVCADLEEVAQKCGLSYKALVALRRVLLAQFSAFPFNGADLYEELKTSTAILSTGIGSLDKLLDAGLYTGEVTEIVGAPGSGKTQVCLCVAAHVAHGLQQNVLYIDSNGGLTASRILQLLQARTPDEEEQAGALQRIQVVRAFDIFQMLDVLQDLRGAVSQQVSSSSGTLKVVVVDSVAAVVAPLLGGQQREGLALMMQLARELKTLARDLSVAVLVTNHMTRDRDSGQLKPALGRSWSFVPSTRLLLDSTQSSGSLGSWRVVCLTKSPRLPTGCQETVDLGSLGTPAFQGDHKGH.

The preferentially binds ssDNA stretch occupies residues 1–83 (MGVLRAGLCP…ELKTSTAILS (83 aa)). 107-114 (GAPGSGKT) serves as a coordination point for ATP.

It belongs to the RecA family. RAD51 subfamily. Part of the BCDX2 complex consisting of RAD51B, RAD51C, RAD51D and XRCC2; the complex has a ring-like structure arranged into a flat disc around a central channel. In the absence of DNA, the BCDX2 subcomplex XRCC2:RAD51D formed a multimeric ring structure; in the presence of single-stranded DNA it formed a filamentous structure with the ssDNA. Interacts with SWSAP1 and ZSWIM7; involved in homologous recombination repair. Interacts with BLM; required for stimulation of BLM activity by the BCDX2 subcomplex XRCC2:RAD51D.

It is found in the nucleus. In terms of biological role, involved in the homologous recombination repair (HRR) pathway of double-stranded DNA breaks arising during DNA replication or induced by DNA-damaging agents. Bind to single-stranded DNA (ssDNA) and has DNA-dependent ATPase activity. Part of the RAD51 paralog protein complex BCDX2 which acts in the BRCA1-BRCA2-dependent HR pathway. Upon DNA damage, BCDX2 acts downstream of BRCA2 recruitment and upstream of RAD51 recruitment. BCDX2 binds predominantly to the intersection of the four duplex arms of the Holliday junction and to junction of replication forks. The BCDX2 complex was originally reported to bind single-stranded DNA, single-stranded gaps in duplex DNA and specifically to nicks in duplex DNA. Involved in telomere maintenance. The BCDX2 subcomplex XRCC2:RAD51D can stimulate Holliday junction resolution by BLM. The sequence is that of DNA repair protein RAD51 homolog 4 (RAD51D) from Bos taurus (Bovine).